The chain runs to 37 residues: Large ribosomal subunit protein bL36 (37 aa).

Belongs to the bacterial ribosomal protein bL36 family.

The polypeptide is Large ribosomal subunit protein bL36 (rpmJ) (Mycobacterium tuberculosis (strain ATCC 25618 / H37Rv)).